A 1093-amino-acid polypeptide reads, in one-letter code: NACHT, LRR and PYD domains-containing protein 14 (1093 aa).

Residues 1 to 97 (MADSSSSSFF…CERAKEEINW (97 aa)) form the Pyrin domain. A disordered region spans residues 102–121 (IGPDDAKAGETQEDQEAVLG). Positions 177-499 (QIVVLQGAAG…MFYMLKGSWE (323 aa)) constitute an NACHT domain. 183-190 (GAAGVGKT) lines the ATP pocket. 11 LRR repeats span residues 730–750 (NLMH…KSLC), 759–780 (KLQT…NISN), 787–807 (SLIF…QLLC), 816–836 (YLER…EYLS), 844–864 (RLTH…KLMS), 873–894 (TLKS…YLST), 901–921 (SLTH…KLLC), 930–951 (NLQD…DLAS), 958–978 (NLRS…KILC), 987–1008 (NIQR…DLSS), and 1015–1035 (RLIK…VKLY).

The protein belongs to the NLRP family. In terms of tissue distribution, testis-specific.

It is found in the cytoplasm. May be involved in inflammation and spermatogenesis. The chain is NACHT, LRR and PYD domains-containing protein 14 (NLRP14) from Homo sapiens (Human).